The sequence spans 142 residues: MAVERTLIIVKPDAMEKGALGKILDRFIQEGFQIKALKMFRFTPEKAGEFYYVHRERPFFQELVEFMSSGPVVAAVLEGEDAIKRVREIIGPTDSEEARKVAPNSIRAQFGTDKGKNAIHASDSPESAQYEICFIFSGLEIV.

ATP is bound by residues K11, F59, R87, T93, R107, and N117. H120 (pros-phosphohistidine intermediate) is an active-site residue.

Belongs to the NDK family. Homotetramer. It depends on Mg(2+) as a cofactor.

The protein localises to the cytoplasm. It catalyses the reaction a 2'-deoxyribonucleoside 5'-diphosphate + ATP = a 2'-deoxyribonucleoside 5'-triphosphate + ADP. It carries out the reaction a ribonucleoside 5'-diphosphate + ATP = a ribonucleoside 5'-triphosphate + ADP. Major role in the synthesis of nucleoside triphosphates other than ATP. The ATP gamma phosphate is transferred to the NDP beta phosphate via a ping-pong mechanism, using a phosphorylated active-site intermediate. The polypeptide is Nucleoside diphosphate kinase (Aquifex aeolicus (strain VF5)).